The sequence spans 334 residues: Cobalt-precorrin-5B C(1)-methyltransferase (334 aa).

This sequence belongs to the CbiD family.

The catalysed reaction is Co-precorrin-5B + S-adenosyl-L-methionine = Co-precorrin-6A + S-adenosyl-L-homocysteine. The protein operates within cofactor biosynthesis; adenosylcobalamin biosynthesis; cob(II)yrinate a,c-diamide from sirohydrochlorin (anaerobic route): step 6/10. Catalyzes the methylation of C-1 in cobalt-precorrin-5B to form cobalt-precorrin-6A. The polypeptide is Cobalt-precorrin-5B C(1)-methyltransferase (Methanoregula boonei (strain DSM 21154 / JCM 14090 / 6A8)).